The chain runs to 671 residues: Probable potassium transport system protein Kup 2 (671 aa).

12 helical membrane passes run 12–32, 56–76, 99–119, 139–159, 172–192, 218–238, 251–271, 296–316, 345–365, 374–394, 400–420, and 429–449; these read FAGL…SPLY, ISLI…MIAL, WLVI…TLTP, IPVP…VILF, AFGP…IANL, VGIL…ALYS, SWPY…AWIL, LFAI…LITG, IYIP…VFLF, AYGL…FEYL, PLYL…MFLI, and GGYV…VWFY.

Belongs to the HAK/KUP transporter (TC 2.A.72) family.

The protein localises to the cell membrane. The enzyme catalyses K(+)(in) + H(+)(in) = K(+)(out) + H(+)(out). In terms of biological role, transport of potassium into the cell. Likely operates as a K(+):H(+) symporter. The polypeptide is Probable potassium transport system protein Kup 2 (Lactobacillus acidophilus (strain ATCC 700396 / NCK56 / N2 / NCFM)).